The following is a 415-amino-acid chain: Multidrug resistance protein MdtA (415 aa).

The N-terminal stretch at 1-21 (MKGSYKSRWVIVIVVVIAAIA) is a signal peptide. The segment covering 31–47 (DSQSAAPGATKQAQQSP) has biased composition (polar residues). 2 disordered regions span residues 31 to 60 (DSQS…GPLA) and 392 to 415 (EAQS…GARS). The segment covering 399–415 (SEEKATSREYAKKGARS) has biased composition (basic and acidic residues).

This sequence belongs to the membrane fusion protein (MFP) (TC 8.A.1) family. In terms of assembly, part of a tripartite efflux system composed of MdtA, MdtB and MdtC.

It localises to the cell inner membrane. Its function is as follows. The MdtABC tripartite complex confers resistance against novobiocin and deoxycholate. In Escherichia coli O139:H28 (strain E24377A / ETEC), this protein is Multidrug resistance protein MdtA.